The following is a 122-amino-acid chain: Large ribosomal subunit protein uL14 (122 aa).

The protein belongs to the universal ribosomal protein uL14 family. In terms of assembly, part of the 50S ribosomal subunit. Forms a cluster with proteins L3 and L19. In the 70S ribosome, L14 and L19 interact and together make contacts with the 16S rRNA in bridges B5 and B8.

In terms of biological role, binds to 23S rRNA. Forms part of two intersubunit bridges in the 70S ribosome. The polypeptide is Large ribosomal subunit protein uL14 (Thermomicrobium roseum (strain ATCC 27502 / DSM 5159 / P-2)).